We begin with the raw amino-acid sequence, 93 residues long: Small ribosomal subunit protein uS19 (93 aa).

This sequence belongs to the universal ribosomal protein uS19 family.

Its function is as follows. Protein S19 forms a complex with S13 that binds strongly to the 16S ribosomal RNA. The chain is Small ribosomal subunit protein uS19 from Pediococcus pentosaceus (strain ATCC 25745 / CCUG 21536 / LMG 10740 / 183-1w).